Reading from the N-terminus, the 62-residue chain is Phycobilisome degradation protein NblA homolog 1 (62 aa).

It to Synechococcus PCC 7942 NblA and some, to chloroplast ycf18.

This Synechocystis sp. (strain ATCC 27184 / PCC 6803 / Kazusa) protein is Phycobilisome degradation protein NblA homolog 1.